The sequence spans 710 residues: DNA ligase (710 aa).

Residues M1–T36 are disordered. Residues D63–D67, S111–I112, and E147 each bind NAD(+). The active-site N6-AMP-lysine intermediate is the K149. The NAD(+) site is built by R170, E206, and K353. Zn(2+)-binding residues include C444, C447, C460, and C466. Residues E623–E710 enclose the BRCT domain. The tract at residues A657–V689 is disordered.

This sequence belongs to the NAD-dependent DNA ligase family. LigA subfamily. Mg(2+) serves as cofactor. It depends on Mn(2+) as a cofactor.

It catalyses the reaction NAD(+) + (deoxyribonucleotide)n-3'-hydroxyl + 5'-phospho-(deoxyribonucleotide)m = (deoxyribonucleotide)n+m + AMP + beta-nicotinamide D-nucleotide.. Its function is as follows. DNA ligase that catalyzes the formation of phosphodiester linkages between 5'-phosphoryl and 3'-hydroxyl groups in double-stranded DNA using NAD as a coenzyme and as the energy source for the reaction. It is essential for DNA replication and repair of damaged DNA. The polypeptide is DNA ligase (Halorubrum lacusprofundi (strain ATCC 49239 / DSM 5036 / JCM 8891 / ACAM 34)).